A 931-amino-acid chain; its full sequence is Dual serine/threonine and tyrosine protein kinase (931 aa).

Residues 1 to 24 are disordered; it reads MEGDAPQRVSERVSGPGPGGGGGG. Residues 397-424 are a coiled coil; that stretch reads RKKENELYESLMNIANRKQEEMKDMICE. Residues 654 to 908 form the Protein kinase domain; sequence PKLGQELGRG…PLLGIVQPML (255 aa). ATP is bound by residues 660–668 and Lys-683; that span reads LGRGQYGVV. Residue Asp-779 is the Proton acceptor of the active site.

Belongs to the protein kinase superfamily. Ser/Thr protein kinase family.

The protein localises to the cytoplasm. It is found in the cell membrane. The protein resides in the apical cell membrane. Its subcellular location is the basolateral cell membrane. It localises to the cell junction. The catalysed reaction is L-seryl-[protein] + ATP = O-phospho-L-seryl-[protein] + ADP + H(+). The enzyme catalyses L-threonyl-[protein] + ATP = O-phospho-L-threonyl-[protein] + ADP + H(+). It catalyses the reaction L-tyrosyl-[protein] + ATP = O-phospho-L-tyrosyl-[protein] + ADP + H(+). Functionally, acts as a positive regulator of ERK phosphorylation downstream of fibroblast growth factor-receptor activation. Involved in the regulation of both caspase-dependent apoptosis and caspase-independent cell death. In the skin, it plays a predominant role in suppressing caspase-dependent apoptosis in response to UV stress in a range of dermal cell types. The protein is Dual serine/threonine and tyrosine protein kinase (DSTYK) of Canis lupus familiaris (Dog).